A 477-amino-acid polypeptide reads, in one-letter code: Ribulose bisphosphate carboxylase large chain (477 aa).

Residues 1–2 (MS) constitute a propeptide that is removed on maturation. P3 carries the N-acetylproline modification. K14 carries the post-translational modification N6,N6,N6-trimethyllysine. Positions 123 and 173 each coordinate substrate. The Proton acceptor role is filled by K175. K177 contributes to the substrate binding site. Residues K201, D203, and E204 each contribute to the Mg(2+) site. Residue K201 is modified to N6-carboxylysine. The Proton acceptor role is filled by H294. Substrate-binding residues include R295, H327, and S379.

The protein belongs to the RuBisCO large chain family. Type I subfamily. Heterohexadecamer of 8 large chains and 8 small chains; disulfide-linked. The disulfide link is formed within the large subunit homodimers. Mg(2+) serves as cofactor. In terms of processing, the disulfide bond which can form in the large chain dimeric partners within the hexadecamer appears to be associated with oxidative stress and protein turnover.

It localises to the plastid. It is found in the chloroplast. It carries out the reaction 2 (2R)-3-phosphoglycerate + 2 H(+) = D-ribulose 1,5-bisphosphate + CO2 + H2O. The enzyme catalyses D-ribulose 1,5-bisphosphate + O2 = 2-phosphoglycolate + (2R)-3-phosphoglycerate + 2 H(+). RuBisCO catalyzes two reactions: the carboxylation of D-ribulose 1,5-bisphosphate, the primary event in carbon dioxide fixation, as well as the oxidative fragmentation of the pentose substrate in the photorespiration process. Both reactions occur simultaneously and in competition at the same active site. This chain is Ribulose bisphosphate carboxylase large chain, found in Atropa belladonna (Belladonna).